We begin with the raw amino-acid sequence, 356 residues long: Butyrate kinase (356 aa).

Belongs to the acetokinase family.

It localises to the cytoplasm. It carries out the reaction butanoate + ATP = butanoyl phosphate + ADP. It participates in lipid metabolism; butanoate metabolism. Functionally, catalyzes the conversion of butyryl-CoA through butyryl phosphate to butyrate. The chain is Butyrate kinase from Clostridium tetani (strain Massachusetts / E88).